The primary structure comprises 217 residues: Uracil-DNA glycosylase (217 aa).

Catalysis depends on D62, which acts as the Proton acceptor.

The protein belongs to the uracil-DNA glycosylase (UDG) superfamily. UNG family.

The protein localises to the cytoplasm. It carries out the reaction Hydrolyzes single-stranded DNA or mismatched double-stranded DNA and polynucleotides, releasing free uracil.. In terms of biological role, excises uracil residues from the DNA which can arise as a result of misincorporation of dUMP residues by DNA polymerase or due to deamination of cytosine. This is Uracil-DNA glycosylase from Streptococcus equi subsp. zooepidemicus (strain H70).